A 952-amino-acid chain; its full sequence is Leucine--tRNA ligase (952 aa).

A 'HIGH' region motif is present at residues 66–77 (PYPSGAGLHVGH). The 'KMSKS' region signature appears at 722–726 (KMGKS). Residue Lys725 participates in ATP binding.

The protein belongs to the class-I aminoacyl-tRNA synthetase family.

It is found in the cytoplasm. It catalyses the reaction tRNA(Leu) + L-leucine + ATP = L-leucyl-tRNA(Leu) + AMP + diphosphate. This Corynebacterium glutamicum (strain R) protein is Leucine--tRNA ligase.